The primary structure comprises 186 residues: Adenine phosphoribosyltransferase (186 aa).

The protein belongs to the purine/pyrimidine phosphoribosyltransferase family. As to quaternary structure, homodimer.

Its subcellular location is the cytoplasm. It catalyses the reaction AMP + diphosphate = 5-phospho-alpha-D-ribose 1-diphosphate + adenine. The protein operates within purine metabolism; AMP biosynthesis via salvage pathway; AMP from adenine: step 1/1. Functionally, catalyzes a salvage reaction resulting in the formation of AMP, that is energically less costly than de novo synthesis. The sequence is that of Adenine phosphoribosyltransferase from Xanthomonas euvesicatoria pv. vesicatoria (strain 85-10) (Xanthomonas campestris pv. vesicatoria).